A 181-amino-acid polypeptide reads, in one-letter code: Small ribosomal subunit protein uS4 (181 aa).

Residues 108 to 172 (RRLQTQVYRR…SPLVSDIHSE (65 aa)) enclose the S4 RNA-binding domain.

Belongs to the universal ribosomal protein uS4 family. As to quaternary structure, part of the 30S ribosomal subunit. Contacts protein S5. The interaction surface between S4 and S5 is involved in control of translational fidelity.

In terms of biological role, one of the primary rRNA binding proteins, it binds directly to 16S rRNA where it nucleates assembly of the body of the 30S subunit. Functionally, with S5 and S12 plays an important role in translational accuracy. This Methanospirillum hungatei JF-1 (strain ATCC 27890 / DSM 864 / NBRC 100397 / JF-1) protein is Small ribosomal subunit protein uS4.